A 269-amino-acid polypeptide reads, in one-letter code: Tryptophan synthase alpha chain (269 aa).

Active-site proton acceptor residues include E49 and D60.

Belongs to the TrpA family. Tetramer of two alpha and two beta chains.

The enzyme catalyses (1S,2R)-1-C-(indol-3-yl)glycerol 3-phosphate + L-serine = D-glyceraldehyde 3-phosphate + L-tryptophan + H2O. The protein operates within amino-acid biosynthesis; L-tryptophan biosynthesis; L-tryptophan from chorismate: step 5/5. Functionally, the alpha subunit is responsible for the aldol cleavage of indoleglycerol phosphate to indole and glyceraldehyde 3-phosphate. The sequence is that of Tryptophan synthase alpha chain from Pseudomonas syringae pv. syringae.